The following is a 148-amino-acid chain: Snaclec 8 (148 aa).

The first 23 residues, 1–23 (MGRFIFVSFSLLVVFFSLSGTEA), serve as a signal peptide directing secretion. Residues 34–148 (YDQNCYKAFE…DTQFRLQEPG (115 aa)) form the C-type lectin domain.

Belongs to the snaclec family. As to quaternary structure, heterodimer; disulfide-linked. In terms of processing, contains disulfide bonds. In terms of tissue distribution, expressed by the venom gland.

Its subcellular location is the secreted. Functionally, interferes with one step of hemostasis (modulation of platelet aggregation, or coagulation cascade, for example). This Echis carinatus sochureki (Saw-scaled viper) protein is Snaclec 8.